Reading from the N-terminus, the 456-residue chain is Alcohol acyltransferase 17 (456 aa).

Catalysis depends on proton acceptor residues His166 and Asp382.

The protein belongs to the plant acyltransferase family. In terms of tissue distribution, expressed in fruit.

Involved in the biosynthesis of volatile esters which confer kiwifruit flavor. Alcohol acyl transferase that can use a wide range of alcohols as substrate to produce esters. The polypeptide is Alcohol acyltransferase 17 (Actinidia deliciosa (Kiwi)).